We begin with the raw amino-acid sequence, 700 residues long: MARTTPIERYRNIGISAHIDAGKTTTSERILFYTGVSHKIGEVHDGAATMDWMEQEQERGITITSAATTAFWSGMSQQYPQHRINVIDTPGHVDFTIEVERSMRVLDGAVMVYCAVGGVQPQSETVWRQANKYKVPRIAFVNKMDRTGANFLRVVEQIKTRLGGNSVPLQLPIGAEENFTGVVDLIKMKAINWNEADQGMTFTYEDVPANMLAECEEWRNNLVEAAAEASEELMEKFFAGEELTEEEIKTALRQRVLSGEVIPVCCGSAFKNKGVQAMLDAVIDYLPAPTDIPAIEGINEDGTPGERHASDDEPFSSLAFKIATDPFVGNLTFFRVYSGVINSGDTVYNSVKQKRERFGRIVQMHANKRDEIKEVRAGDIAAAIGLKDVGTGDTLCAQEAPIILERMEFPEPVISVAVEPKTKADQEKMGLALGRLAQEDPSFRVHTDEESGETIISGMGELHLDIIVDRMKREFKVEANIGKPQVSYRETIRTRVNDVEGKHAKQSGGRGQYGHVVIDLYPLDPEGPGYEFVNEIKGGVIPGEYIPAVDKGIQEQLKSGPLAGYPVVDLGVRLHFGSYHDVDSSELAFKLAASLAFKAAFAKANPVLLEPIMKVEVETPPDYVGDVIGDLSRRRAMVNGQEANEFVVKINAEVPLSEMFGYATDLRSQTQGRASYSMEPLKYAEAPTSVAAAVIEARKK.

In terms of domain architecture, tr-type G spans 8-290 (ERYRNIGISA…AVIDYLPAPT (283 aa)). Residues 17 to 24 (AHIDAGKT), 88 to 92 (DTPGH), and 142 to 145 (NKMD) contribute to the GTP site.

It belongs to the TRAFAC class translation factor GTPase superfamily. Classic translation factor GTPase family. EF-G/EF-2 subfamily.

Its subcellular location is the cytoplasm. Functionally, catalyzes the GTP-dependent ribosomal translocation step during translation elongation. During this step, the ribosome changes from the pre-translocational (PRE) to the post-translocational (POST) state as the newly formed A-site-bound peptidyl-tRNA and P-site-bound deacylated tRNA move to the P and E sites, respectively. Catalyzes the coordinated movement of the two tRNA molecules, the mRNA and conformational changes in the ribosome. The sequence is that of Elongation factor G from Glaesserella parasuis serovar 5 (strain SH0165) (Haemophilus parasuis).